The sequence spans 341 residues: Aromatic amino acid aminotransferase (341 aa).

An N6-(pyridoxal phosphate)lysine modification is found at K213.

Belongs to the class-II pyridoxal-phosphate-dependent aminotransferase family. Homodimer. Pyridoxal 5'-phosphate is required as a cofactor.

It carries out the reaction an aromatic L-alpha-amino acid + 2-oxoglutarate = an aromatic oxo-acid + L-glutamate. Its function is as follows. Aminotransferase that catalyzes the conversion of aromatic amino acids and 2-oxoglutarate into corresponding aromatic oxo acids and L-glutamate. The chain is Aromatic amino acid aminotransferase from Corynebacterium glutamicum (strain R).